Consider the following 120-residue polypeptide: MVNLNPKRSDEPVWWGLFGAGGTWFAMLTPVTILVLGILVPLGVIGPESMNYLRVAGFVTSIIGALFVIGSISMPMWHAMHRVHHGMHDLKFHTGTAGKIACYATAALATVLSIVFIFMI.

The next 3 membrane-spanning stretches (helical) occupy residues 25–45 (FAMLTPVTILVLGILVPLGVI), 55–75 (VAGFVTSIIGALFVIGSISMP), and 100–120 (IACYATAALATVLSIVFIFMI).

Belongs to the FrdD family. As to quaternary structure, part of an enzyme complex containing four subunits: a flavoprotein (FrdA), an iron-sulfur protein (FrdB), and two hydrophobic anchor proteins (FrdC and FrdD).

It localises to the cell inner membrane. Anchors the catalytic components of the fumarate reductase complex to the cell membrane, binds quinones. The protein is Fumarate reductase subunit D of Aliivibrio salmonicida (strain LFI1238) (Vibrio salmonicida (strain LFI1238)).